The following is a 310-amino-acid chain: Olfactory receptor 5H14 (310 aa).

Residues 1 to 28 (MEEENATLLTEFVLTGFLYQPQWKIPLF) lie on the Extracellular side of the membrane. Asn5 carries N-linked (GlcNAc...) asparagine glycosylation. The helical transmembrane segment at 29–49 (LAFLVIYLITIMGNLGLIAVI) threads the bilayer. Over 50–56 (WKDPHLH) the chain is Cytoplasmic. A helical transmembrane segment spans residues 57–77 (IPMYLLLGNLAFVDALLSSSV). The Extracellular portion of the chain corresponds to 78-98 (TLKMLINFLAKSKMISLSECK). A disulfide bridge links Cys97 with Cys179. The chain crosses the membrane as a helical span at residues 99–119 (IQLFSFAISVTTECFLLATMA). Residues 120–143 (YDRYVAICKPLLYPAIMTNGLCIR) lie on the Cytoplasmic side of the membrane. Residues 144-164 (LLILSYVGGLLHALIHEGFLF) form a helical membrane-spanning segment. At 165 to 195 (RLTFCNSNIIQHFYCDIIPLLKISYTDSSIN) the chain is on the extracellular side. Residues 196–216 (FLMVFIFAGSIQVFTIGTVLI) traverse the membrane as a helical segment. Residues 217–240 (SYIFVLYTILKKKSVKGMRKAFST) lie on the Cytoplasmic side of the membrane. Residues 241–261 (CGAHLLSVSLYYGPLAFMYMG) form a helical membrane-spanning segment. Residues 262–271 (SASPQADDQD) are Extracellular-facing. Residues 272 to 292 (MMESLFYTVIVPLLNPMIYSL) form a helical membrane-spanning segment. Over 293-310 (RNKQVIASFTKMFKRNDV) the chain is Cytoplasmic.

It belongs to the G-protein coupled receptor 1 family.

It is found in the cell membrane. Functionally, odorant receptor. The chain is Olfactory receptor 5H14 (OR5H14) from Homo sapiens (Human).